The sequence spans 801 residues: Endonuclease MutS2 (801 aa).

336 to 343 (GPNTGGKT) contributes to the ATP binding site. The segment at 696–721 (AQQSKAKQKQQKIVKTKTASGSARAT) is disordered. The segment covering 701–710 (AKQKQQKIVK) has biased composition (basic residues). In terms of domain architecture, Smr spans 726 to 801 (LDLRGVRYEA…GDGATIAELS (76 aa)).

This sequence belongs to the DNA mismatch repair MutS family. MutS2 subfamily. As to quaternary structure, homodimer. Binds to stalled ribosomes, contacting rRNA.

Its function is as follows. Endonuclease that is involved in the suppression of homologous recombination and thus may have a key role in the control of bacterial genetic diversity. In terms of biological role, acts as a ribosome collision sensor, splitting the ribosome into its 2 subunits. Detects stalled/collided 70S ribosomes which it binds and splits by an ATP-hydrolysis driven conformational change. Acts upstream of the ribosome quality control system (RQC), a ribosome-associated complex that mediates the extraction of incompletely synthesized nascent chains from stalled ribosomes and their subsequent degradation. Probably generates substrates for RQC. This is Endonuclease MutS2 from Leuconostoc citreum (strain KM20).